We begin with the raw amino-acid sequence, 345 residues long: S-adenosylmethionine:tRNA ribosyltransferase-isomerase (345 aa).

This sequence belongs to the QueA family. In terms of assembly, monomer.

Its subcellular location is the cytoplasm. It carries out the reaction 7-aminomethyl-7-carbaguanosine(34) in tRNA + S-adenosyl-L-methionine = epoxyqueuosine(34) in tRNA + adenine + L-methionine + 2 H(+). Its pathway is tRNA modification; tRNA-queuosine biosynthesis. Its function is as follows. Transfers and isomerizes the ribose moiety from AdoMet to the 7-aminomethyl group of 7-deazaguanine (preQ1-tRNA) to give epoxyqueuosine (oQ-tRNA). This Anaeromyxobacter dehalogenans (strain 2CP-C) protein is S-adenosylmethionine:tRNA ribosyltransferase-isomerase.